The sequence spans 221 residues: Adenylate kinase (221 aa).

Residue 10–15 (GAGKGT) participates in ATP binding. Residues 30–59 (STGDMLRAAVKAGTPLGVEAKKVMDAGGLV) are NMP. AMP-binding positions include T31, R36, 57-59 (GLV), 85-88 (GFPR), and Q92. Positions 122-159 (GRRVHVASGRTYHLKYNPPKTEGVDDETGEPLIQRDDD) are LID. Residues R123 and 132–133 (TY) contribute to the ATP site. The segment at 138-159 (NPPKTEGVDDETGEPLIQRDDD) is disordered. 2 residues coordinate AMP: R156 and R167. G207 contacts ATP.

Belongs to the adenylate kinase family. Monomer.

It is found in the cytoplasm. The enzyme catalyses AMP + ATP = 2 ADP. It functions in the pathway purine metabolism; AMP biosynthesis via salvage pathway; AMP from ADP: step 1/1. Functionally, catalyzes the reversible transfer of the terminal phosphate group between ATP and AMP. Plays an important role in cellular energy homeostasis and in adenine nucleotide metabolism. The polypeptide is Adenylate kinase (Cupriavidus taiwanensis (strain DSM 17343 / BCRC 17206 / CCUG 44338 / CIP 107171 / LMG 19424 / R1) (Ralstonia taiwanensis (strain LMG 19424))).